A 271-amino-acid polypeptide reads, in one-letter code: ATP synthase subunit a (271 aa).

5 helical membrane passes run 31-51, 89-109, 124-144, 186-206, and 216-236; these read WDTI…GLYM, FVAP…WIGV, DINL…IVSL, IFSG…VLWL, and LGVG…YYAF. The segment at 247–271 is disordered; sequence DEHADGGDSSSRQASPTPLPAGQVR.

Belongs to the ATPase A chain family. F-type ATPases have 2 components, CF(1) - the catalytic core - and CF(0) - the membrane proton channel. CF(1) has five subunits: alpha(3), beta(3), gamma(1), delta(1), epsilon(1). CF(0) has three main subunits: a(1), b(2) and c(9-12). The alpha and beta chains form an alternating ring which encloses part of the gamma chain. CF(1) is attached to CF(0) by a central stalk formed by the gamma and epsilon chains, while a peripheral stalk is formed by the delta and b chains.

The protein localises to the cell membrane. Functionally, key component of the proton channel; it plays a direct role in the translocation of protons across the membrane. This chain is ATP synthase subunit a, found in Acidothermus cellulolyticus (strain ATCC 43068 / DSM 8971 / 11B).